Here is a 187-residue protein sequence, read N- to C-terminus: Transmembrane protein 11-A, mitochondrial (187 aa).

Transmembrane regions (helical) follow at residues 79 to 95 (TAVL…LALP) and 102 to 119 (VSLP…LYGI).

Belongs to the TMEM11 family.

Its subcellular location is the mitochondrion inner membrane. In terms of biological role, plays a role in mitochondrial morphogenesis. This Xenopus laevis (African clawed frog) protein is Transmembrane protein 11-A, mitochondrial (tmem11-a).